Reading from the N-terminus, the 97-residue chain is U-scoloptoxin(10)-Ssd2a (97 aa).

Residues 1-23 form the signal peptide; the sequence is MNKSMLIFFTILFLTYIIEEKEA.

Contains 3 disulfide bonds. Expressed by the venom gland.

The protein localises to the secreted. The polypeptide is U-scoloptoxin(10)-Ssd2a (Scolopendra dehaani (Thai centipede)).